Consider the following 49-residue polypeptide: Small integral membrane protein 27 (49 aa).

Residues 11-31 traverse the membrane as a helical segment; sequence WTYSLLLLAIVLLSWGFVIYA.

The protein resides in the membrane. This is Small integral membrane protein 27 from Mus musculus (Mouse).